Here is a 301-residue protein sequence, read N- to C-terminus: Large ribosomal subunit protein uL18z (301 aa).

Belongs to the universal ribosomal protein uL18 family. As to quaternary structure, component of the large ribosomal subunit (LSU). As to expression, expressed in seedlings, roots, stems, leaves, inflorescences and siliques.

The protein localises to the cytoplasm. It localises to the nucleus. It is found in the nucleolus. Its subcellular location is the nucleoplasm. In terms of biological role, component of the ribosome, a large ribonucleoprotein complex responsible for the synthesis of proteins in the cell. The small ribosomal subunit (SSU) binds messenger RNAs (mRNAs) and translates the encoded message by selecting cognate aminoacyl-transfer RNA (tRNA) molecules. The large subunit (LSU) contains the ribosomal catalytic site termed the peptidyl transferase center (PTC), which catalyzes the formation of peptide bonds, thereby polymerizing the amino acids delivered by tRNAs into a polypeptide chain. The nascent polypeptides leave the ribosome through a tunnel in the LSU and interact with protein factors that function in enzymatic processing, targeting, and the membrane insertion of nascent chains at the exit of the ribosomal tunnel. Seems involved in the regulation of cell proliferation. Essential in leaf polarity establishment, probably having a role for translation in leaf dorsoventral patterning to specify leaf adaxial identity. In Arabidopsis thaliana (Mouse-ear cress), this protein is Large ribosomal subunit protein uL18z.